The primary structure comprises 345 residues: Metal-dependent phosphohydrolase cns2 (345 aa).

In terms of domain architecture, HD spans 70 to 171 (RLEHSVGAFI…QLCADRLDYA (102 aa)).

As to quaternary structure, interacts with cns1.

The protein resides in the lipid droplet. The protein operates within secondary metabolite biosynthesis. In terms of biological role, metal-dependent phosphohydrolase; part of the gene cluster that mediates the biosynthesis of cordycepin (COR) and pentostatin (PTN), two adenosine analogs with related bioactivity profiles as both mimic adenosine and can inhibit some of the processes that are adenosine dependent. Within the pathway, cns2 catalyzes dephosphorylation of 3'-AMP to produce 2'-carbonyl-3'-deoxyadenosine (2'-C-3'-dA). The first step of cordycepin biosynthesis involves hydroxyl phosphorylation of the 3'-OH position on adenosine to produce adenosine-3'-monophosphate (3'-AMP), catalyzed by kinase activity of cns3. Next, 3'-AMP is dephosphorylated to 2'-carbonyl-3'-deoxyadenosine by cns2, which is finally converted to cordycepin (3'-deoxyadenosine) by the oxidoreductase cns1. The sequence is that of Metal-dependent phosphohydrolase cns2 from Cordyceps militaris (strain CM01) (Caterpillar fungus).